The following is a 712-amino-acid chain: Polyribonucleotide nucleotidyltransferase (712 aa).

Residues aspartate 485 and aspartate 491 each contribute to the Mg(2+) site. The region spanning 552-611 (PRIHTMKIDPKKIKDVIGKGGAVIRSLTEETGTSIDIDDDGTVKIAATDNNAAKMVMSRI) is the KH domain. The region spanning 621 to 689 (NAIYTGKVSR…RQNRIRLTMK (69 aa)) is the S1 motif domain.

This sequence belongs to the polyribonucleotide nucleotidyltransferase family. As to quaternary structure, component of the RNA degradosome, which is a multiprotein complex involved in RNA processing and mRNA degradation. Mg(2+) is required as a cofactor.

It localises to the cytoplasm. The catalysed reaction is RNA(n+1) + phosphate = RNA(n) + a ribonucleoside 5'-diphosphate. Involved in mRNA degradation. Catalyzes the phosphorolysis of single-stranded polyribonucleotides processively in the 3'- to 5'-direction. This is Polyribonucleotide nucleotidyltransferase from Haemophilus ducreyi (strain 35000HP / ATCC 700724).